The following is a 321-amino-acid chain: Beta-lactamase (321 aa).

The first 30 residues, 1–30 (MEKNRKKQIVVLSIALVCIFILVFSLFHKS), serve as a signal peptide directing secretion. The active-site Acyl-ester intermediate is S83. 233-235 (KTG) provides a ligand contact to substrate.

Belongs to the class-A beta-lactamase family.

The enzyme catalyses a beta-lactam + H2O = a substituted beta-amino acid. Its activity is regulated as follows. Inhibited by clavulanic acid. In terms of biological role, can hydrolyze cephalosporins, penicillins and also cefoxitin; but at a slow rate. This Phocaeicola vulgatus (Bacteroides vulgatus) protein is Beta-lactamase (cfxA).